A 35-amino-acid chain; its full sequence is Jingzhaotoxin F5-21.66 (35 aa).

3 disulfide bridges follow: Cys-2/Cys-16, Cys-9/Cys-21, and Cys-15/Cys-29.

Belongs to the neurotoxin 10 (Hwtx-1) family. 48 (Jztx-F5) subfamily. In terms of tissue distribution, expressed by the venom gland.

Its subcellular location is the secreted. Functionally, probable ion channel inhibitor. This Chilobrachys guangxiensis (Chinese earth tiger tarantula) protein is Jingzhaotoxin F5-21.66.